We begin with the raw amino-acid sequence, 265 residues long: RING finger protein 208 (265 aa).

A disordered region spans residues 83–106; the sequence is MPTLEGASHTPPLPRRPRKGSSEL. Position 103 is a phosphoserine (serine 103). Residues 147–194 form an RING-type zinc finger; it reads CPTCGHTYNVTQRRPRVLSCLHSVCEQCLQILYESCPKYKFISCPTCH.

The sequence is that of RING finger protein 208 (Rnf208) from Mus musculus (Mouse).